Consider the following 481-residue polypeptide: MSEELLSFEPATGEQLWRGKVSDVDAEVEIARRAWPEWAAKPVTFRTETLRRFADRVKAESEAFADLIARETGKPLWEARTEVESVANKVDISVKAYAERTPNRRIEGAMGLRSAVRHKPHGALAVLGPYNFPAHLPNGHIVPALIAGNSVVFKPSEKTPAVGAKLVELLHSAGVPQEVLRLVVGGPDTGKALAAHPGIDGLLFTGSARTGLALNRQFAGQPGKMLALEMGGNNPIVAWDTADIRTAAILIVQSAFLSAGQRCSNARRLIVKDSLADALIAEVRELANRLIVDHPHADPAPYMGPVIDNEAADGLTESFLVLMSNGGQVIRHMTRPVAGRPFLTPGIIDVTTMAERPDVELFGPLLQVIRVETFEAAIAEANNTAFGLSAALIGGTPQLYDQFWANARAGVINWNRPTNGASSAAPFGGVGLSGNHRPSAFYAADYCAYPVASAESDALRASIGVGLRDPEGSQLVTKKYL.

206-211 contributes to the NAD(+) binding site; the sequence is GSARTG. Residues Glu-229 and Cys-263 contribute to the active site.

It belongs to the aldehyde dehydrogenase family. AstD subfamily.

It carries out the reaction N-succinyl-L-glutamate 5-semialdehyde + NAD(+) + H2O = N-succinyl-L-glutamate + NADH + 2 H(+). Its pathway is amino-acid degradation; L-arginine degradation via AST pathway; L-glutamate and succinate from L-arginine: step 4/5. In terms of biological role, catalyzes the NAD-dependent reduction of succinylglutamate semialdehyde into succinylglutamate. The sequence is that of N-succinylglutamate 5-semialdehyde dehydrogenase from Sphingopyxis alaskensis (strain DSM 13593 / LMG 18877 / RB2256) (Sphingomonas alaskensis).